Here is a 332-residue protein sequence, read N- to C-terminus: Ethylene-responsive transcription factor ERF119 (332 aa).

Residues methionine 1–leucine 33 form a disordered region. Basic residues predominate over residues proline 15–proline 24. Positions lysine 130–alanine 187 form a DNA-binding region, AP2/ERF.

Belongs to the AP2/ERF transcription factor family. ERF subfamily.

It is found in the nucleus. Probably acts as a transcriptional activator. Binds to the GCC-box pathogenesis-related promoter element. May be involved in the regulation of gene expression by stress factors and by components of stress signal transduction pathways. The chain is Ethylene-responsive transcription factor ERF119 (ERF119) from Arabidopsis thaliana (Mouse-ear cress).